The following is a 222-amino-acid chain: UPF0758 protein YPN_3801 (222 aa).

One can recognise an MPN domain in the interval 100–222 (VLLNPGITQK…CVSFAERGWL (123 aa)). Zn(2+)-binding residues include histidine 171, histidine 173, and aspartate 184. The JAMM motif motif lies at 171–184 (HNHPSGKAEPSQAD).

It belongs to the UPF0758 family. YicR subfamily.

This Yersinia pestis bv. Antiqua (strain Nepal516) protein is UPF0758 protein YPN_3801.